The sequence spans 675 residues: MTIRHQGQQYRPRMAFLQKIEALVKDMQNPETGVRMHNQRVLVTSVPHAMTGGDVLQWITQRLWISNLEAQNLGNFIVKYGYIYPLQDPKNLILKPDSSLYRFQTPYFWPTQQWPAEDTDYAIYLAKRNIKKKGILEEYEKENYDFLNKKINYKWDFVIMQAKEQYRTGKERNKADRYALDCQEKAYWLVHRSPPGMNNVLDYGLDRVTNPNEVKKQTVTAVRKEIMYYQQALMRSTVKSSVSLGGIVKYSEQFSSNDAIMSGCLPSNPWITDDTQFWDLNAKLVEIPTKMRVERWAFNFSELIRDPKGRQSFQYFLKKEFSGENLGFWEACEDLKYGDQSKVKEKAEEIYKLFLAPGARRWINIDGKTMDITVKGLRHPHRYVLDAAQTHIYMLMKKDSYARYLKSPIYKEMLAKAIEPQETTKRSSTLPFMRRHLRSSPSPVILRQLEEEEKAREAANTVDITQPGQHLAPSPHLAVYTGTCVPPSPSSPFSPSCRSPRKPFASPSRFIRRPSIAICPSPSRVALEGSSGLEPKGEASWSGANSGPSVTENREPSADHSRPQPRAPPKARAALSLGRFLRRGCLASPVFARLSPKCPSVSHGKVQPLGDMGQQLPRLKPKKVANFFQIKMEMPTDSGTCLMDSDDPRAGESGDQTTEKEVICPWESLAEGKAG.

The region spanning 30-105 (PETGVRMHNQ…PDSSLYRFQT (76 aa)) is the DEP domain. Positions 222–283 (VRKEIMYYQQ…DTQFWDLNAK (62 aa)) constitute a G protein gamma domain. One can recognise an RGS domain in the interval 299–414 (NFSELIRDPK…LKSPIYKEML (116 aa)). Disordered regions lie at residues 524–571 (RVAL…PPKA) and 637–662 (DSGTCLMDSDDPRAGESGDQTTEKEV). Residues 542 to 551 (SGANSGPSVT) show a composition bias toward polar residues. 2 stretches are compositionally biased toward basic and acidic residues: residues 552–562 (ENREPSADHSR) and 646–662 (DDPRAGESGDQTTEKEV).

In terms of assembly, heterodimer with GNB5. Interacts with RGS7BP, leading to regulate the subcellular location of the heterodimer formed with GNB5. Component of the RGS9-1-Gbeta5 complex composed of RGS9 (RGS9-1), Gbeta5 (GNB5) and RGS9BP. Interacts with PDE6G and GNAT1. Post-translationally, retinal isoform 1 is light-dependent phosphorylated at 'Ser-475'. Phosphorylation is decreased by light exposition. Interaction with RGS9BP is decreased when isoform 1 is phosphorylated at 'Ser-475'. In terms of tissue distribution, isoform 1 is expressed in photoreceptor outer segments. Isoform 2 is expressed in brain striatum.

The protein resides in the membrane. Its function is as follows. Inhibits signal transduction by increasing the GTPase activity of G protein alpha subunits thereby driving them into their inactive GDP-bound form. Binds to GNAT1. Involved in phototransduction; key element in the recovery phase of visual transduction. This is Regulator of G-protein signaling 9 (Rgs9) from Mus musculus (Mouse).